Consider the following 280-residue polypeptide: Putative aquaporin-10 (280 aa).

The Cytoplasmic segment spans residues 1 to 8; that stretch reads MEAVSSEY. A helical transmembrane segment spans residues 9–29; it reads YFPLYSALGYFALVFGIGEIA. Residues 30-64 lie on the Extracellular side of the membrane; the sequence is RIITAKYVSPRGNSQLFLYELIGTIQMCTCVYENG. Residues 65–85 traverse the membrane as a helical segment; that stretch reads IIFKNYGFPAIFICVALLLTA. The Cytoplasmic segment spans residues 86-114; the sequence is GNIFNRGAMTNCAPIFEQFVFGNLGSSKF. Residues 115 to 135 form a helical membrane-spanning segment; sequence LTILSAQLIGATFASKFAYLI. At 136–164 the chain is on the extracellular side; it reads WNITAPYSTAHLENASNLECILHYKQTAG. A helical membrane pass occupies residues 165 to 185; that stretch reads IVIGFEIVGAFVVRIVVAQLL. Topologically, residues 186–193 are cytoplasmic; the sequence is ARPALIKL. Residues 194 to 214 traverse the membrane as a helical segment; the sequence is IPFAISAYLSLALYVVGVPGL. Residues 215–233 lie on the Extracellular side of the membrane; it reads NPIVATARLYGCRGIDNSS. Residues 234–254 form a helical membrane-spanning segment; sequence FFILYWFCPVLGWLTGAYVVG. Residues 255-280 are Cytoplasmic-facing; sequence QKSPSKKSAKDVKAEKKAKAAAKKSD. The segment at 256 to 280 is disordered; it reads KSPSKKSAKDVKAEKKAKAAAKKSD. The span at 262-280 shows a compositional bias: basic and acidic residues; the sequence is SAKDVKAEKKAKAAAKKSD.

The protein belongs to the MIP/aquaporin (TC 1.A.8) family.

It is found in the membrane. The protein is Putative aquaporin-10 (aqp-10) of Caenorhabditis elegans.